Reading from the N-terminus, the 184-residue chain is Large ribosomal subunit protein uL6 (184 aa).

Belongs to the universal ribosomal protein uL6 family. Part of the 50S ribosomal subunit.

This protein binds to the 23S rRNA, and is important in its secondary structure. It is located near the subunit interface in the base of the L7/L12 stalk, and near the tRNA binding site of the peptidyltransferase center. This is Large ribosomal subunit protein uL6 from Fervidobacterium nodosum (strain ATCC 35602 / DSM 5306 / Rt17-B1).